The chain runs to 234 residues: MEFSPAFETGVLVQRYKRFLTDITLDNGEQVTIHCPNTGSMKNCLFPGEKVWFSTSDNPKRKYSRTWELAQTPEGHIIGINTGRANALAEEAIHAGVITELQGYHSLRREVKYGSENSRIDILLEDTKKPNCYIEVKSCTLLEEGQGYFPDAVTARGQKHLRELMEMVEQGQRAVLLFVVQHSGIKSVQAATHIDAEYAELLSKAYHKGVEIIAYSTDSSPLGASLVKSCPVRL.

Belongs to the SfsA family.

The chain is Sugar fermentation stimulation protein homolog from Shewanella pealeana (strain ATCC 700345 / ANG-SQ1).